The chain runs to 156 residues: ATP synthase subunit b (156 aa).

The chain crosses the membrane as a helical span at residues 7–26 (FIGQMVAFAIFIYLTYRYVW).

The protein belongs to the ATPase B chain family. As to quaternary structure, F-type ATPases have 2 components, F(1) - the catalytic core - and F(0) - the membrane proton channel. F(1) has five subunits: alpha(3), beta(3), gamma(1), delta(1), epsilon(1). F(0) has three main subunits: a(1), b(2) and c(10-14). The alpha and beta chains form an alternating ring which encloses part of the gamma chain. F(1) is attached to F(0) by a central stalk formed by the gamma and epsilon chains, while a peripheral stalk is formed by the delta and b chains.

Its subcellular location is the cell inner membrane. In terms of biological role, f(1)F(0) ATP synthase produces ATP from ADP in the presence of a proton or sodium gradient. F-type ATPases consist of two structural domains, F(1) containing the extramembraneous catalytic core and F(0) containing the membrane proton channel, linked together by a central stalk and a peripheral stalk. During catalysis, ATP synthesis in the catalytic domain of F(1) is coupled via a rotary mechanism of the central stalk subunits to proton translocation. Component of the F(0) channel, it forms part of the peripheral stalk, linking F(1) to F(0). In Cellvibrio japonicus (strain Ueda107) (Pseudomonas fluorescens subsp. cellulosa), this protein is ATP synthase subunit b.